Consider the following 160-residue polypeptide: Type IV major fimbrial protein FimA (160 aa).

A propeptide spans 1–7 (leader sequence); it reads MKSLQKG. Phe-8 bears the N-methylphenylalanine mark. A helical transmembrane segment spans residues 8 to 28; that stretch reads FTLIELMIVVAIIGILAAIAI.

This sequence belongs to the N-Me-Phe pilin family. As to quaternary structure, the pili are polar flexible filaments of about 5.4 nanometers diameter and 2.5 micrometers average length; they consist of only a single polypeptide chain arranged in a helical configuration of five subunits per turn in the assembled pilus.

The protein resides in the fimbrium. It is found in the membrane. Its function is as follows. Major component of the type IV fimbriae that plays an essential role in twitching motility, natural transformation, and protease secretion. This chain is Type IV major fimbrial protein FimA (fimA), found in Dichelobacter nodosus (Bacteroides nodosus).